Reading from the N-terminus, the 763-residue chain is Phosphoglycerol transferase I (763 aa).

4 helical membrane-spanning segments follow: residues 1-21 (MSELLSFALFLASVLIYAWKA), 26-46 (WWFAATLTVLGLFVVLNITLF), 77-97 (ILPGIGIVLGLTAVFGALGWI), and 108-128 (FGYSLLALLLALGSVDASPAF).

The protein belongs to the OpgB family.

It is found in the cell inner membrane. The enzyme catalyses a phosphatidylglycerol + a membrane-derived-oligosaccharide D-glucose = a 1,2-diacyl-sn-glycerol + a membrane-derived-oligosaccharide 6-(glycerophospho)-D-glucose.. Its pathway is glycan metabolism; osmoregulated periplasmic glucan (OPG) biosynthesis. Its function is as follows. Transfers a phosphoglycerol residue from phosphatidylglycerol to the membrane-bound nascent glucan backbones. The polypeptide is Phosphoglycerol transferase I (Escherichia coli O139:H28 (strain E24377A / ETEC)).